We begin with the raw amino-acid sequence, 75 residues long: Large ribosomal subunit protein bL31 (75 aa).

4 residues coordinate Zn(2+): Cys16, Cys18, Cys37, and Cys40.

It belongs to the bacterial ribosomal protein bL31 family. Type A subfamily. Part of the 50S ribosomal subunit. Requires Zn(2+) as cofactor.

Binds the 23S rRNA. In Baumannia cicadellinicola subsp. Homalodisca coagulata, this protein is Large ribosomal subunit protein bL31.